Reading from the N-terminus, the 236-residue chain is Ascorbate-specific transmembrane electron transporter 2 (236 aa).

Residues Met1–Thr13 are Cytoplasmic-facing. A helical membrane pass occupies residues Tyr14–Phe34. The Cytochrome b561 domain maps to Ala15–Ile219. Residues Arg35–Asn50 lie on the Extracellular side of the membrane. A helical membrane pass occupies residues Val51–Tyr71. Position 52 (His52) interacts with heme b. Ala67 to Pro75 is a binding site for L-ascorbate. At Arg72 to Leu84 the chain is on the cytoplasmic side. The chain crosses the membrane as a helical span at residues Ile85–Phe105. Residues His86 and His120 each contribute to the heme b site. Over Lys106–Trp122 the chain is Extracellular. Residue Leu116 to Ile125 coordinates monodehydro-L-ascorbate radical. Residues Ile123–Phe143 form a helical membrane-spanning segment. The Cytoplasmic portion of the chain corresponds to Phe144–Lys153. The chain crosses the membrane as a helical span at residues Gly154–Ala174. His159 serves as a coordination point for heme b. Over Glu175–Asn201 the chain is Extracellular. Residues Phe202 to Val222 traverse the membrane as a helical segment. Residues Arg223 to Asn236 lie on the Cytoplasmic side of the membrane.

Heme b is required as a cofactor.

The protein resides in the membrane. Functionally, two-heme-containing cytochrome. Catalyzes ascorbate-dependent trans-membrane electron transfer by utilizing a concerted H(+)/e(-) transfer mechanism. This is Ascorbate-specific transmembrane electron transporter 2 from Zea mays (Maize).